Here is a 490-residue protein sequence, read N- to C-terminus: Ribulose bisphosphate carboxylase large chain (490 aa).

Asparagine 127 and threonine 177 together coordinate substrate. Lysine 179 (proton acceptor) is an active-site residue. Lysine 181 provides a ligand contact to substrate. Residues lysine 205, aspartate 207, and glutamate 208 each coordinate Mg(2+). Residue lysine 205 is modified to N6-carboxylysine. Histidine 297 functions as the Proton acceptor in the catalytic mechanism. Residues arginine 298, histidine 330, and serine 382 each coordinate substrate.

Belongs to the RuBisCO large chain family. Type I subfamily. As to quaternary structure, heterohexadecamer of 8 large chains and 8 small chains. The cofactor is Mg(2+).

It is found in the plastid. The protein resides in the chloroplast. The catalysed reaction is 2 (2R)-3-phosphoglycerate + 2 H(+) = D-ribulose 1,5-bisphosphate + CO2 + H2O. It carries out the reaction D-ribulose 1,5-bisphosphate + O2 = 2-phosphoglycolate + (2R)-3-phosphoglycerate + 2 H(+). Its function is as follows. RuBisCO catalyzes two reactions: the carboxylation of D-ribulose 1,5-bisphosphate, the primary event in carbon dioxide fixation, as well as the oxidative fragmentation of the pentose substrate in the photorespiration process. Both reactions occur simultaneously and in competition at the same active site. The protein is Ribulose bisphosphate carboxylase large chain of Thalassiosira nordenskioeldii (Marine diatom).